A 203-amino-acid chain; its full sequence is Guanylate kinase (203 aa).

The Guanylate kinase-like domain occupies 5–183 (GVLYIISAPS…AVEELKSVVV (179 aa)). Position 12–19 (12–19 (APSGAGKT)) interacts with ATP.

The protein belongs to the guanylate kinase family.

It is found in the cytoplasm. The catalysed reaction is GMP + ATP = GDP + ADP. Its function is as follows. Essential for recycling GMP and indirectly, cGMP. This chain is Guanylate kinase, found in Geobacter metallireducens (strain ATCC 53774 / DSM 7210 / GS-15).